Reading from the N-terminus, the 892-residue chain is Protein FAM193B (892 aa).

Disordered stretches follow at residues 1–78 (MTRR…TSSQ), 164–192 (SCGG…NSGD), 237–321 (EHHQ…PLLK), and 379–403 (DEGL…THPR). The span at 28-37 (APEPQPPPPS) shows a compositional bias: pro residues. Residues 56–65 (DGPREEEEPK) are compositionally biased toward basic and acidic residues. Positions 169–185 (SHSSSSSSSSSSSSSSS) are enriched in low complexity. 3 stretches are compositionally biased toward pro residues: residues 248–258 (PNSPTGPPPHP), 274–285 (YPPPLPTTPVAP), and 309–321 (SPHP…PLLK). Residues 379–388 (DEGLGEEEDS) show a composition bias toward acidic residues. Positions 391–400 (ERSSCTSSST) are enriched in low complexity. Positions 485–517 (NSARAAKRARHKLKKKEKEKARLATEALKQVNR) form a coiled coil. 2 stretches are compositionally biased toward polar residues: residues 587-597 (LTPSDLSGSSQ) and 610-621 (TLGSPQSHTLQA). Disordered stretches follow at residues 587–655 (LTPS…ENGL) and 671–837 (VKTP…SLDD). Positions 637-650 (PPPWTEVRGPPPGI) are enriched in pro residues. Residues 736 to 757 (KSQVSSPKQPSKGSEPAKVGSG) are compositionally biased toward low complexity. Phosphoserine occurs at positions 764, 776, and 882.

It belongs to the FAM193 family.

Its subcellular location is the cytoplasm. It localises to the nucleus. The sequence is that of Protein FAM193B (Fam193b) from Mus musculus (Mouse).